We begin with the raw amino-acid sequence, 218 residues long: Ras-related protein Rab-4A (218 aa).

The GTP site is built by G23, T24, G25, K26, S27, C28, S42, H44, and T45. S27 is a Mg(2+) binding site. The short motif at 44-49 (HTIGVE) is the Switch 1 element. Residues T45 and D68 each coordinate Mg(2+). Residues 70 to 79 (AGQERFRSVT) carry the Switch 2 motif. GTP is bound at residue G71. Residue Q72 is modified to 5-glutamyl serotonin. The GTP site is built by N126, K127, D129, A157, and L158. S190 bears the Phosphoserine mark. S204 is modified (phosphoserine; by CDK1). S-geranylgeranyl cysteine attachment occurs at residues C216 and C218. C218 carries the cysteine methyl ester modification.

It belongs to the small GTPase superfamily. Rab family. Interacts with SGSM1, SGSM2 and SGSM3. Interacts with RAB11FIP1, RABEP1, ZFYVE20 and RUFY1. Interacts (membrane-bound form) with NDRG1; the interaction involves NDRG1 in vesicular recycling of E-cadherin. Interacts (in GTP-bound form) with GRIPAP1 (via N-terminus). Interacts with RABEP1 and RBSN. Does not interact with HPS4. Interacts with RABEP2; this interaction may mediate VEGFR2 cell surface expression. Mg(2+) serves as cofactor. In terms of processing, serotonylation of Gln-72 by TGM2 during activation and aggregation of platelets leads to constitutive activation of GTPase activity. Post-translationally, phosphorylated by CDK1 kinase during mitosis.

Its subcellular location is the membrane. The protein localises to the cytoplasm. It localises to the early endosome membrane. It is found in the recycling endosome membrane. The enzyme catalyses GTP + H2O = GDP + phosphate + H(+). Regulated by guanine nucleotide exchange factors (GEFs) which promote the exchange of bound GDP for free GTP. Regulated by GTPase activating proteins (GAPs) which increase the GTP hydrolysis activity. Inhibited by GDP dissociation inhibitors (GDIs). The small GTPases Rab are key regulators of intracellular membrane trafficking, from the formation of transport vesicles to their fusion with membranes. Rabs cycle between an inactive GDP-bound form and an active GTP-bound form that is able to recruit to membranes different sets of downstream effectors directly responsible for vesicle formation, movement, tethering and fusion. RAB4A is involved in protein transport. Also plays a role in vesicular traffic. Mediates VEGFR2 endosomal trafficking to enhance VEGFR2 signaling. Acts as a regulator of platelet alpha-granule release during activation and aggregation of platelets. This Rattus norvegicus (Rat) protein is Ras-related protein Rab-4A.